The primary structure comprises 764 residues: Thyrotropin receptor (764 aa).

Positions 1–20 (MRPADLLQLVLLLDLPRDLG) are cleaved as a signal peptide. At 21 to 413 (GMGCSSPPCE…EFNPCEDIMG (393 aa)) the chain is on the extracellular side. A disulfide bridge connects residues Cys-31 and Cys-41. Residues Asn-77, Asn-99, and Asn-113 are each glycosylated (N-linked (GlcNAc...) asparagine). LRR repeat units follow at residues 100-124 (LSKV…ALKE), 125-150 (LPLL…VYST), 152-174 (IFFI…AFQG), 176-199 (CNET…AFNG), 200-223 (TKLD…AFGG), 227-248 (GPSL…GLEH), and 250-271 (KELI…SFLH). Asn-177 and Asn-198 each carry an N-linked (GlcNAc...) asparagine glycan. The N-linked (GlcNAc...) asparagine glycan is linked to Asn-302. Sulfotyrosine is present on Tyr-385. A helical membrane pass occupies residues 414-441 (YKFLRIVVWFVSLLALLGNVFVLLILLT). Residues 442 to 450 (SHYKLNVPR) are Cytoplasmic-facing. Residues 451-473 (FLMCNLAFADFCMGMYLLLIASV) traverse the membrane as a helical segment. Over 474-494 (DLYTHSEYYNHAIDWQTGPGC) the chain is Extracellular. An intrachain disulfide couples Cys-494 to Cys-569. The helical transmembrane segment at 495–517 (NTAGFFTVFASELSVYTLTVITL) threads the bilayer. At 518–537 (ERWYAITFAMRLDRKIRLRH) the chain is on the cytoplasmic side. A helical membrane pass occupies residues 538–560 (ACAIMVGGWVCCFLLALLPLVGI). Residues 561–580 (SSYAKVSICLPMDTETPLAL) lie on the Extracellular side of the membrane. Residues 581-602 (AYIVFVLTLNIVAFVIVCCCYV) form a helical membrane-spanning segment. Residues 603-625 (KIYITVRNPQYNPGDKDTKIAKR) lie on the Cytoplasmic side of the membrane. The chain crosses the membrane as a helical span at residues 626–649 (MAVLIFTDFICMAPISFYALSAIL). Topologically, residues 650–660 (NKPLITVSNSK) are extracellular. Residues 661 to 682 (ILLVLFYPLNSCANPFLYAIFT) form a helical membrane-spanning segment. Over 683–764 (KAFQRDVFIL…ISEEYMQTVL (82 aa)) the chain is Cytoplasmic. Positions 762-764 (TVL) match the PDZ-binding motif.

It belongs to the G-protein coupled receptor 1 family. FSH/LSH/TSH subfamily. Interacts with heterodimer GPHA2:GPHB5; this interaction stimulates cAMP production. Interacts (via the PDZ-binding motif) with SCRIB; regulates TSHR trafficking and function. Post-translationally, glycosylated. In terms of processing, sulfated. Sulfation on Tyr-385 plays a role in thyrotropin receptor binding and activation. In terms of tissue distribution, expressed in thyroide cells (at protein level). Expressed in the thyroid.

The protein resides in the cell membrane. It localises to the basolateral cell membrane. Receptor for the thyroid-stimulating hormone (TSH) or thyrotropin. Also acts as a receptor for the heterodimeric glycoprotein hormone (GPHA2:GPHB5) or thyrostimulin. The activity of this receptor is mediated by G proteins which activate adenylate cyclase. Plays a central role in controlling thyroid cell metabolism. The chain is Thyrotropin receptor (TSHR) from Homo sapiens (Human).